A 1342-amino-acid chain; its full sequence is Cytokinesis protein sepH (1342 aa).

Residues 1–10 show a composition bias toward low complexity; it reads MVSRSSEGAE. The interval 1 to 47 is disordered; it reads MVSRSSEGAEGPPPSAPKPPNTPAKSRLSRLGSSPSKREDKSRDDRM. Residues 11–22 are compositionally biased toward pro residues; it reads GPPPSAPKPPNT. Over residues 36–47 the composition is skewed to basic and acidic residues; the sequence is SKREDKSRDDRM. Residues 61–308 enclose the Protein kinase domain; it reads YQLGDCLGKG…ARKLLKHPWI (248 aa). Residues 67–75 and Lys90 each bind ATP; that span reads LGKGAFGSV. Asp180 (proton acceptor) is an active-site residue. 3 disordered regions span residues 336–396, 441–486, and 552–591; these read NEAL…EEDN, IKSD…QLQE, and ADENVDPFESSPSKEAIRNRASAEDVMGQQPQLRKQISVK. Polar residues predominate over residues 369 to 379; the sequence is KDTLPSPVSRN. Residues 658–695 are a coiled coil; the sequence is FAQLEEGLDEMDLEANIARDKHARLRNQVEGLVSSLKT. The tract at residues 1201–1342 is disordered; it reads SEAYGMGKRK…QTQADADWTP (142 aa). The segment covering 1207–1217 has biased composition (basic residues); the sequence is GKRKPMVRRRS. Composition is skewed to polar residues over residues 1218-1244 and 1273-1290; these read TSATPPNLLANQSAPSTPQMNRTSQSK and DGSTPSLTAGLNGSTGAS. Residues 1315-1324 are compositionally biased toward low complexity; that stretch reads RPSSSLSRRQ.

This sequence belongs to the protein kinase superfamily. Ser/Thr protein kinase family. CDC7 subfamily. Requires Mg(2+) as cofactor.

The catalysed reaction is L-seryl-[protein] + ATP = O-phospho-L-seryl-[protein] + ADP + H(+). It carries out the reaction L-threonyl-[protein] + ATP = O-phospho-L-threonyl-[protein] + ADP + H(+). Functionally, required for early events during cytokinesis including localization of cytoskeletal components to the cytokinetic ring. This Aspergillus terreus (strain NIH 2624 / FGSC A1156) protein is Cytokinesis protein sepH.